The primary structure comprises 1653 residues: Protein TOPAZ1 (1653 aa).

Disordered regions lie at residues 1–94 (MRPP…TDLV), 284–303 (YSVE…KSGK), and 415–442 (ISST…SETE). The span at 63–78 (GREETEGDKLAKENGK) shows a compositional bias: basic and acidic residues. The span at 423 to 442 (SDGHHMEKRSPRGDLRSETE) shows a compositional bias: basic and acidic residues.

In terms of tissue distribution, restricted to testis, where it localizes to germ cells.

Its subcellular location is the cytoplasm. The protein resides in the cytosol. In terms of biological role, important for normal spermatogenesis and male fertility. Specifically required for progression to the post-meiotic stages of spermatocyte development. Seems to be necessary for normal expression levels of a number of testis-expressed gene transcripts, although its role in this process is unclear. This is Protein TOPAZ1 from Mus musculus (Mouse).